The following is a 540-amino-acid chain: Chaperonin GroEL (540 aa).

Residues 29-32 (TLGP), 86-90 (DGTTT), G413, 476-478 (NAA), and D492 each bind ATP.

The protein belongs to the chaperonin (HSP60) family. In terms of assembly, forms a cylinder of 14 subunits composed of two heptameric rings stacked back-to-back. Interacts with the co-chaperonin GroES.

It localises to the cytoplasm. It catalyses the reaction ATP + H2O + a folded polypeptide = ADP + phosphate + an unfolded polypeptide.. In terms of biological role, together with its co-chaperonin GroES, plays an essential role in assisting protein folding. The GroEL-GroES system forms a nano-cage that allows encapsulation of the non-native substrate proteins and provides a physical environment optimized to promote and accelerate protein folding. The polypeptide is Chaperonin GroEL (Streptococcus agalactiae).